The primary structure comprises 108 residues: Thiosulfate sulfurtransferase GlpE (108 aa).

In terms of domain architecture, Rhodanese spans 17 to 105 (RQGAAVLVDI…WHRRFPANVA (89 aa)). C65 (cysteine persulfide intermediate) is an active-site residue.

It belongs to the GlpE family.

Its subcellular location is the cytoplasm. It carries out the reaction thiosulfate + hydrogen cyanide = thiocyanate + sulfite + 2 H(+). It catalyses the reaction thiosulfate + [thioredoxin]-dithiol = [thioredoxin]-disulfide + hydrogen sulfide + sulfite + 2 H(+). Transferase that catalyzes the transfer of sulfur from thiosulfate to thiophilic acceptors such as cyanide or dithiols. May function in a CysM-independent thiosulfate assimilation pathway by catalyzing the conversion of thiosulfate to sulfite, which can then be used for L-cysteine biosynthesis. The sequence is that of Thiosulfate sulfurtransferase GlpE from Salmonella agona (strain SL483).